Consider the following 531-residue polypeptide: Putative heme-binding protein HQ_1094A (531 aa).

H177 provides a ligand contact to heme. Residues 269-340 (AHGEAHGHAH…STNTNTQDSE (72 aa)) form a disordered region. Residues 271–281 (GEAHGHAHGDS) are compositionally biased toward basic and acidic residues. The span at 284 to 306 (GSGGGGGSSHGQSPGGASAGGSA) shows a compositional bias: gly residues. Over residues 308 to 317 (GTEDADHSDS) the composition is skewed to basic and acidic residues. The span at 318-338 (RSTTSADTTQSDTSTNTNTQD) shows a compositional bias: low complexity. The ABM domain occupies 441-529 (GTMGMFYTVK…VLSERPRHVF (89 aa)).

This sequence in the N-terminal section; belongs to the ChdC family.

In Haloquadratum walsbyi (strain DSM 16790 / HBSQ001), this protein is Putative heme-binding protein HQ_1094A.